Here is a 230-residue protein sequence, read N- to C-terminus: Cytidylate kinase (230 aa).

17–25 (GPTASGKGT) provides a ligand contact to ATP.

This sequence belongs to the cytidylate kinase family. Type 1 subfamily.

The protein resides in the cytoplasm. The enzyme catalyses CMP + ATP = CDP + ADP. It carries out the reaction dCMP + ATP = dCDP + ADP. This chain is Cytidylate kinase, found in Ralstonia nicotianae (strain ATCC BAA-1114 / GMI1000) (Ralstonia solanacearum).